Here is a 569-residue protein sequence, read N- to C-terminus: Probable ABC transporter permease protein y4fN (569 aa).

13 helical membrane-spanning segments follow: residues 10–30, 68–88, 98–118, 121–141, 145–165, 196–216, 247–267, 304–324, 363–383, 395–415, 426–446, 480–500, and 534–554; these read VFYWLGLIVIAWAVLTFLLVP, VWMTAATTLTVTIVGMFQVAV, GFLKIAFSTPLVFGGVVAAAG, FTYGPSGAITAALAALFPSLP, FIGWFGVLFAHTFLMTSFHFL, VVLPVILPTVLAVTLLTLITA, PDMAALLALLMGLVLMGLILL, LAYLLAAIYLMPVALIVLFSF, MSSIAVAVGLAITLFAVPIMV, ICFVLPWIIPTMLLAVGLIVA, LVLLGSYWLLPIGYVIFSLPL, VVLPLVAPTAILVAGMKFNNL, and AAVSLVYVTLIMAFSLAVILI. Residues 64 to 268 enclose the ABC transmembrane type-1 1 domain; it reads LWNTVWMTAA…LVLMGLILLS (205 aa). The ABC transmembrane type-1 2 domain maps to 357–551; the sequence is FFNSMLMSSI…TLIMAFSLAV (195 aa).

Belongs to the binding-protein-dependent transport system permease family. CysTW subfamily.

The protein resides in the cell inner membrane. Functionally, probably part of the binding-protein-dependent transport system y4fNOP. Probably responsible for the translocation of the substrate across the membrane. The chain is Probable ABC transporter permease protein y4fN from Sinorhizobium fredii (strain NBRC 101917 / NGR234).